Reading from the N-terminus, the 434-residue chain is APETALA2-like protein 2 (434 aa).

The interval 1–116 (MLLDLNVESP…KTRRGPRSRS (116 aa)) is disordered. Residues 12-23 (RSGTSSSSVLNS) show a composition bias toward low complexity. Over residues 25–38 (DAGGGGGGGGGGGL) the composition is skewed to gly residues. A compositionally biased stretch (pro residues) spans 72–87 (LPPPPPAAPSPAPAWQ). Residues 104–113 (VAKKTRRGPR) show a composition bias toward basic residues. The Nuclear localization signal signature appears at 106–115 (KKTRRGPRSR). 2 DNA-binding regions (AP2/ERF) span residues 118–174 (QYRG…INFN) and 210–267 (KFRG…TNFE). Residues 291–295 (LDLRI) carry the EAR motif.

It belongs to the AP2/ERF transcription factor family. AP2 subfamily. In terms of assembly, may form homodimer. Interacts with TPR2/ASP1. Highly expressed in developing panicles and in young seedlings. Present at low levels at all developmental stages.

It localises to the nucleus. Functionally, probable transcription factor. Involved in spikelet transition. Together with SNB, controls synergistically inflorescence architecture and floral meristem establishment via the regulation of spatio-temporal expression of B- and E-function floral organ identity genes in the lodicules and of spikelet meristem genes. Prevents lemma and palea elongation as well as grain growth. The chain is APETALA2-like protein 2 from Oryza sativa subsp. japonica (Rice).